A 149-amino-acid chain; its full sequence is Ribonuclease pancreatic (149 aa).

The signal sequence occupies residues 1 to 25 (MGLEKSFILFPLLILVLGWVQSSLG). Positions 32 and 35 each coordinate substrate. Catalysis depends on H37, which acts as the Proton acceptor. 4 disulfide bridges follow: C51–C109, C65–C120, C83–C135, and C90–C97. Residue N59 is glycosylated (N-linked (GlcNAc...) asparagine). 66–70 (KPVNT) is a substrate binding site. N-linked (GlcNAc...) asparagine glycosylation occurs at N87. 2 residues coordinate substrate: K91 and R110. H144 functions as the Proton donor in the catalytic mechanism.

Belongs to the pancreatic ribonuclease family. In terms of assembly, monomer. Interacts with and forms tight 1:1 complexes with RNH1. Dimerization of two such complexes may occur. Interaction with RNH1 inhibits this protein. In terms of tissue distribution, pancreas.

It localises to the secreted. The catalysed reaction is an [RNA] containing cytidine + H2O = an [RNA]-3'-cytidine-3'-phosphate + a 5'-hydroxy-ribonucleotide-3'-[RNA].. The enzyme catalyses an [RNA] containing uridine + H2O = an [RNA]-3'-uridine-3'-phosphate + a 5'-hydroxy-ribonucleotide-3'-[RNA].. In terms of biological role, endonuclease that catalyzes the cleavage of RNA on the 3' side of pyrimidine nucleotides. Acts on single-stranded and double-stranded RNA. This is Ribonuclease pancreatic (RNASE1) from Abrothrix jelskii (Jelski's altiplano mouse).